A 75-amino-acid polypeptide reads, in one-letter code: Microcin H47 (75 aa).

Residues 1-15 (MREITESQLRYISGA) constitute a propeptide that is removed on maturation. The helical transmembrane segment at 30–50 (AIVGALAGIPGGPLGVVVGAV) threads the bilayer.

Its subcellular location is the secreted. It localises to the host cell membrane. In terms of biological role, bactericidal antibiotic. Active on bacteria phylogenetically related to the producing strain. The protein is Microcin H47 (mchB) of Escherichia coli O6:H1 (strain CFT073 / ATCC 700928 / UPEC).